Here is an 84-residue protein sequence, read N- to C-terminus: Putative membrane protein insertion efficiency factor (84 aa).

The disordered stretch occupies residues 63–84 (GEDPVPNHFTLRRNKKEKPSKS).

This sequence belongs to the UPF0161 family.

The protein resides in the cell membrane. Functionally, could be involved in insertion of integral membrane proteins into the membrane. This Streptococcus mutans serotype c (strain ATCC 700610 / UA159) protein is Putative membrane protein insertion efficiency factor.